We begin with the raw amino-acid sequence, 143 residues long: uncharacterized protein (143 aa).

Positions 5–137 (DARLASDLSL…LRSAADLMLA (133 aa)) constitute an HTH marR-type domain. Positions 51–74 (PGALAIRERVRPPSMTRVIASLAD) form a DNA-binding region, H-T-H motif.

Homodimer.

This is an uncharacterized protein from Mycobacterium bovis (strain ATCC BAA-935 / AF2122/97).